The chain runs to 515 residues: Envelope glycoprotein (515 aa).

The signal sequence occupies residues 1-33 (MPKERRSRRRPQPIIRWVSLTLTLLALCQPIQT). At 34-435 (WRCSLSLGNQ…LGLTAWVRET (402 aa)) the chain is on the extracellular side. Residues Asn129 and Asn203 are each glycosylated (N-linked (GlcNAc...) asparagine; by host). Residues 212–215 (CAIC) carry the CXXC motif. Cystine bridges form between Cys212/Cys215, Cys212/Cys392, and Cys384/Cys391. Residues Asn230, Asn251, Asn256, Asn271, and Asn287 are each glycosylated (N-linked (GlcNAc...) asparagine; by host). Residues 304–324 (VAALTLGLALSVGLTGINVAV) are fusion peptide. Coiled coils occupy residues 330 to 376 (QRLT…WLYI) and 388 to 420 (NEPC…DWQW). A glycan (N-linked (GlcNAc...) asparagine; by host) is linked at Asn351. Residues 365–381 (AQNRRGLDWLYIRLGFQ) form an immunosuppression region. The CX6CC signature appears at 384 to 392 (CPTINEPCC). N-linked (GlcNAc...) asparagine; by host glycosylation is present at Asn398. The helical transmembrane segment at 436–456 (IHSVLSLFLLALFLLFLAPCL) threads the bilayer. Cys455 carries the S-palmitoyl cysteine; by host lipid modification. At 457–515 (IKCLTSRLLKLLRQAPHFPEISFPPKPDSDYQALLPSAPEIYSHLSPTKPDYINLRPCP) the chain is on the cytoplasmic side.

In terms of assembly, the mature envelope protein (Env) consists of a trimer of SU-TM heterodimers attached by a labile interchain disulfide bond. In terms of processing, specific enzymatic cleavages in vivo yield mature proteins. Envelope glycoproteins are synthesized as an inactive precursor that is N-glycosylated and processed likely by host cell furin or by a furin-like protease in the Golgi to yield the mature SU and TM proteins. The cleavage site between SU and TM requires the minimal sequence [KR]-X-[KR]-R. The CXXC motif is highly conserved across a broad range of retroviral envelope proteins. It is thought to participate in the formation of a labile disulfide bond possibly with the CX6CC motif present in the transmembrane protein. Isomerization of the intersubunit disulfide bond to an SU intrachain disulfide bond is thought to occur upon receptor recognition in order to allow membrane fusion. Post-translationally, the transmembrane protein is palmitoylated.

It is found in the virion membrane. Its subcellular location is the host cell membrane. Its function is as follows. The surface protein (SU) attaches the virus to the host cell by binding to its receptor. This interaction triggers the refolding of the transmembrane protein (TM) and is thought to activate its fusogenic potential by unmasking its fusion peptide. Fusion occurs at the host cell plasma membrane. In terms of biological role, the transmembrane protein (TM) acts as a class I viral fusion protein. Under the current model, the protein has at least 3 conformational states: pre-fusion native state, pre-hairpin intermediate state, and post-fusion hairpin state. During viral and target cell membrane fusion, the coiled coil regions (heptad repeats) assume a trimer-of-hairpins structure, positioning the fusion peptide in close proximity to the C-terminal region of the ectodomain. The formation of this structure appears to drive apposition and subsequent fusion of viral and target cell membranes. Membranes fusion leads to delivery of the nucleocapsid into the cytoplasm. The protein is Envelope glycoprotein (env) of Bovine leukemia virus (isolate Belgium LB59) (BLV).